The chain runs to 726 residues: Type VI secretion system spike protein VgrG1c (726 aa).

The interval 502–522 (ANATQSGTKSRSSKGGTPANF) is disordered. Positions 507–518 (SGTKSRSSKGGT) are enriched in low complexity.

It belongs to the VgrG protein family. As to quaternary structure, forms homomultimers. Part of the type VI secretion system (T6SS).

The protein resides in the secreted. Part of the H1 type VI secretion system (H1-T6SS) specialized secretion system, which delivers several virulence factors in both prokaryotic and eukaryotic cells during infection. Allows the delivery of the Tse5/RhsP1 toxin to target cells where it exerts its toxicity. This chain is Type VI secretion system spike protein VgrG1c, found in Pseudomonas aeruginosa (strain ATCC 15692 / DSM 22644 / CIP 104116 / JCM 14847 / LMG 12228 / 1C / PRS 101 / PAO1).